Here is a 436-residue protein sequence, read N- to C-terminus: 3-ketoacyl-CoA thiolase (436 aa).

Catalysis depends on C99, which acts as the Acyl-thioester intermediate. Residues H392 and C422 each act as proton acceptor in the active site.

It belongs to the thiolase-like superfamily. Thiolase family. As to quaternary structure, heterotetramer of two alpha chains (FadJ) and two beta chains (FadI).

Its subcellular location is the cytoplasm. It catalyses the reaction an acyl-CoA + acetyl-CoA = a 3-oxoacyl-CoA + CoA. It functions in the pathway lipid metabolism; fatty acid beta-oxidation. Catalyzes the final step of fatty acid oxidation in which acetyl-CoA is released and the CoA ester of a fatty acid two carbons shorter is formed. This Yersinia enterocolitica serotype O:8 / biotype 1B (strain NCTC 13174 / 8081) protein is 3-ketoacyl-CoA thiolase.